A 776-amino-acid chain; its full sequence is Ankyrin repeat and EF-hand domain-containing protein 1 (776 aa).

ANK repeat units lie at residues 47–76, 184–213, 217–246, and 250–279; these read NGLSALHLASVSNDIDMVSFLLDLGAHPDV, TGRTALMEASREGVVEIVRGILERGGEVNA, DRHHAAHFAAKGGFFDILKLLFAYNGDVGL, and NGNTPLHYAAMGGFADCCKYIAQRGCDLKW. Residues 335–369 form the EF-hand domain; that stretch reads EREAFLREAFAVLDRGDGSISKNDFVMVLEERQDY. 4 ANK repeats span residues 524–553, 557–586, 590–619, and 623–652; these read YYKTPLMTACASGNIDVVKFLLEKGANVNA, FLWTPLHFACHAGQQDIVELLVESGALIDA, NNSTPLNRAIESCRLDTVKYLLDIGAKFQL, and KGHSAMDVAKAYADYRIIDLIKEKLDNLPK.

This chain is Ankyrin repeat and EF-hand domain-containing protein 1 (ANKEF1), found in Homo sapiens (Human).